A 146-amino-acid chain; its full sequence is DNA-directed RNA polymerase subunit beta (146 aa).

The protein belongs to the RNA polymerase beta chain family. The RNAP catalytic core consists of 2 alpha, 1 beta, 1 beta' and 1 omega subunit. When a sigma factor is associated with the core the holoenzyme is formed, which can initiate transcription.

The enzyme catalyses RNA(n) + a ribonucleoside 5'-triphosphate = RNA(n+1) + diphosphate. DNA-dependent RNA polymerase catalyzes the transcription of DNA into RNA using the four ribonucleoside triphosphates as substrates. This is DNA-directed RNA polymerase subunit beta (rpoB) from Liberibacter africanus (Citrus greening disease).